The primary structure comprises 628 residues: Beta-galactosidase large subunit (628 aa).

Glutamate 468 functions as the Proton donor in the catalytic mechanism. Glutamate 536 (nucleophile) is an active-site residue.

It belongs to the glycosyl hydrolase 2 family. In terms of assembly, heterodimer of a large (LacL) and a small subunit (LacM).

It catalyses the reaction Hydrolysis of terminal non-reducing beta-D-galactose residues in beta-D-galactosides.. Component of a beta-galactosidase. This is Beta-galactosidase large subunit (lacL) from Lactobacillus acidophilus (strain ATCC 700396 / NCK56 / N2 / NCFM).